Reading from the N-terminus, the 315-residue chain is Biotin synthase (315 aa).

Residues 39–266 (NSLQFATLLS…KSAIRLTAGR (228 aa)) enclose the Radical SAM core domain. The [4Fe-4S] cluster site is built by C54, C58, and C61. [2Fe-2S] cluster is bound by residues C98, C129, C189, and R261.

This sequence belongs to the radical SAM superfamily. Biotin synthase family. Homodimer. [4Fe-4S] cluster serves as cofactor. It depends on [2Fe-2S] cluster as a cofactor.

The enzyme catalyses (4R,5S)-dethiobiotin + (sulfur carrier)-SH + 2 reduced [2Fe-2S]-[ferredoxin] + 2 S-adenosyl-L-methionine = (sulfur carrier)-H + biotin + 2 5'-deoxyadenosine + 2 L-methionine + 2 oxidized [2Fe-2S]-[ferredoxin]. Its pathway is cofactor biosynthesis; biotin biosynthesis; biotin from 7,8-diaminononanoate: step 2/2. Functionally, catalyzes the conversion of dethiobiotin (DTB) to biotin by the insertion of a sulfur atom into dethiobiotin via a radical-based mechanism. The protein is Biotin synthase of Legionella pneumophila (strain Corby).